Here is a 61-residue protein sequence, read N- to C-terminus: Alpha-conotoxin CnIJ (61 aa).

The first 17 residues, 1-17 (MMFTVFLLVVLTTTVVS), serve as a signal peptide directing secretion. A propeptide spanning residues 18 to 44 (FPSDSASDGRDDEAKDERSDMYELKRN) is cleaved from the precursor. Disulfide bonds link Cys47–Cys52 and Cys48–Cys59. Cys59 is subject to Cysteine amide.

The protein belongs to the conotoxin A superfamily. In terms of tissue distribution, expressed by the venom duct.

The protein resides in the secreted. This chain is Alpha-conotoxin CnIJ, found in Conus consors (Singed cone).